A 251-amino-acid polypeptide reads, in one-letter code: Hydroxyacylglutathione hydrolase (251 aa).

Zn(2+) is bound by residues His-53, His-55, Asp-57, His-58, His-110, Asp-127, and His-165.

This sequence belongs to the metallo-beta-lactamase superfamily. Glyoxalase II family. As to quaternary structure, monomer. Requires Zn(2+) as cofactor.

It catalyses the reaction an S-(2-hydroxyacyl)glutathione + H2O = a 2-hydroxy carboxylate + glutathione + H(+). Its pathway is secondary metabolite metabolism; methylglyoxal degradation; (R)-lactate from methylglyoxal: step 2/2. Thiolesterase that catalyzes the hydrolysis of S-D-lactoyl-glutathione to form glutathione and D-lactic acid. The sequence is that of Hydroxyacylglutathione hydrolase from Erwinia tasmaniensis (strain DSM 17950 / CFBP 7177 / CIP 109463 / NCPPB 4357 / Et1/99).